Here is a 135-residue protein sequence, read N- to C-terminus: Transcriptional activator protein (135 aa).

A Nuclear localization signal motif is present at residues K17–R32. Residues C37 to H54 fold into a zinc finger. Residues A82–Q102 form a disordered region. Positions A120 to F135 are transactivation.

The protein belongs to the geminiviridae transcriptional activator protein family. As to quaternary structure, monomer. Homodimer. Homooligomer. Self-interaction correlates with nuclear localization and efficient activation of transcription. Monomers suppress local silencing by interacting with and inactivating host adenosine kinase 2 (ADK2) in the cytoplasm. Interacts with and inhibits host SNF1 kinase. Binds to ssDNA. Phosphorylated.

Its subcellular location is the host nucleus. The protein resides in the host cytoplasm. Strong activator of the late viral genes promoters. Enhances the expression of the capsid protein and nuclear shuttle protein. Acts as a suppressor of RNA-mediated gene silencing, also known as post-transcriptional gene silencing (PTGS), a mechanism of plant viral defense that limits the accumulation of viral RNAs. Suppresses the host RNA silencing by inhibiting adenosine kinase 2 (ADK2), a kinase involved in a general methylation pathway. Also suppresses the host basal defense by interacting with and inhibiting SNF1 kinase, a key regulator of cell metabolism implicated in innate antiviral defense. Determines pathogenicity. This chain is Transcriptional activator protein, found in Mungbean yellow mosaic virus (strain Vigna) (MYMV).